Consider the following 2094-residue polypeptide: Protein Ycf2 (2094 aa).

Residue 1385 to 1392 coordinates ATP; the sequence is GPPETGRS.

This sequence belongs to the Ycf2 family.

It localises to the plastid. Its subcellular location is the chloroplast stroma. Its function is as follows. Probable ATPase of unknown function. Its presence in a non-photosynthetic plant (Epifagus virginiana) and experiments in tobacco indicate that it has an essential function which is probably not related to photosynthesis. The chain is Protein Ycf2 from Huperzia lucidula (Shining clubmoss).